Consider the following 355-residue polypeptide: Phosphoribosylformylglycinamidine cyclo-ligase (355 aa).

It belongs to the AIR synthase family.

It localises to the cytoplasm. It catalyses the reaction 2-formamido-N(1)-(5-O-phospho-beta-D-ribosyl)acetamidine + ATP = 5-amino-1-(5-phospho-beta-D-ribosyl)imidazole + ADP + phosphate + H(+). The protein operates within purine metabolism; IMP biosynthesis via de novo pathway; 5-amino-1-(5-phospho-D-ribosyl)imidazole from N(2)-formyl-N(1)-(5-phospho-D-ribosyl)glycinamide: step 2/2. The protein is Phosphoribosylformylglycinamidine cyclo-ligase of Paraburkholderia xenovorans (strain LB400).